The sequence spans 434 residues: UDP-N-acetylmuramoylalanine--D-glutamate ligase (434 aa).

An ATP-binding site is contributed by 117–123 (GTNGKST).

It belongs to the MurCDEF family.

The protein resides in the cytoplasm. The catalysed reaction is UDP-N-acetyl-alpha-D-muramoyl-L-alanine + D-glutamate + ATP = UDP-N-acetyl-alpha-D-muramoyl-L-alanyl-D-glutamate + ADP + phosphate + H(+). The protein operates within cell wall biogenesis; peptidoglycan biosynthesis. Cell wall formation. Catalyzes the addition of glutamate to the nucleotide precursor UDP-N-acetylmuramoyl-L-alanine (UMA). This chain is UDP-N-acetylmuramoylalanine--D-glutamate ligase, found in Sphingopyxis alaskensis (strain DSM 13593 / LMG 18877 / RB2256) (Sphingomonas alaskensis).